An 81-amino-acid chain; its full sequence is Beta-catenin-interacting protein 1 (81 aa).

Position 59 is a phosphoserine (Ser-59).

This sequence belongs to the CTNNBIP1 family. Binds CTNNB1.

It is found in the cytoplasm. The protein resides in the nucleus. Prevents the interaction between CTNNB1 and TCF family members, and acts as a negative regulator of the Wnt signaling pathway. In Bos taurus (Bovine), this protein is Beta-catenin-interacting protein 1 (CTNNBIP1).